Reading from the N-terminus, the 260-residue chain is Hydroxyethylthiazole kinase (260 aa).

Position 38 (M38) interacts with substrate. 2 residues coordinate ATP: R114 and T159. G186 is a binding site for substrate.

This sequence belongs to the Thz kinase family. Mg(2+) serves as cofactor.

It catalyses the reaction 5-(2-hydroxyethyl)-4-methylthiazole + ATP = 4-methyl-5-(2-phosphooxyethyl)-thiazole + ADP + H(+). The protein operates within cofactor biosynthesis; thiamine diphosphate biosynthesis; 4-methyl-5-(2-phosphoethyl)-thiazole from 5-(2-hydroxyethyl)-4-methylthiazole: step 1/1. In terms of biological role, catalyzes the phosphorylation of the hydroxyl group of 4-methyl-5-beta-hydroxyethylthiazole (THZ). In Helicobacter pylori (strain G27), this protein is Hydroxyethylthiazole kinase.